We begin with the raw amino-acid sequence, 507 residues long: Glutamyl-tRNA(Gln) amidotransferase subunit A, mitochondrial (507 aa).

Residues lysine 79 and serine 160 each act as charge relay system in the active site. Serine 184 (acyl-ester intermediate) is an active-site residue.

Belongs to the amidase family. GatA subfamily. In terms of assembly, subunit of the heterotrimeric GatCAB amidotransferase (AdT) complex, composed of A, B and C subunits.

It localises to the mitochondrion. The enzyme catalyses L-glutamyl-tRNA(Gln) + L-glutamine + ATP + H2O = L-glutaminyl-tRNA(Gln) + L-glutamate + ADP + phosphate + H(+). Allows the formation of correctly charged Gln-tRNA(Gln) through the transamidation of misacylated Glu-tRNA(Gln) in the mitochondria. The reaction takes place in the presence of glutamine and ATP through an activated gamma-phospho-Glu-tRNA(Gln). This Drosophila pseudoobscura pseudoobscura (Fruit fly) protein is Glutamyl-tRNA(Gln) amidotransferase subunit A, mitochondrial.